The sequence spans 584 residues: Beta-(1--&gt;2)glucan export ATP-binding/permease protein NdvA (584 aa).

The ABC transmembrane type-1 domain maps to 21-301 (VSLVVAANII…MRQFSTQIFE (281 aa)). The next 6 helical transmembrane spans lie at 29 to 49 (IILA…IDAI), 57 to 77 (DILF…VLVA), 136 to 156 (THLA…SMDV), 158 to 178 (LTLV…MVMD), 248 to 268 (IAST…VQSG), and 272 to 292 (VGDV…LDQM). In terms of domain architecture, ABC transporter spans 335 to 569 (VEFRHVSFDF…GGRFAALLHT (235 aa)). 368-375 (GPTGAGKT) provides a ligand contact to ATP.

Belongs to the ABC transporter superfamily. Beta-(1--&gt;2)glucan exporter (TC 3.A.1.108.1) family. As to quaternary structure, homodimer.

It localises to the cell inner membrane. The enzyme catalyses [(1-&gt;2)-beta-D-glucosyl](n)(in) + ATP + H2O = [(1-&gt;2)-beta-D-glucosyl](n)(out) + ADP + phosphate + H(+). In terms of biological role, involved in beta-(1--&gt;2)glucan export. Transmembrane domains (TMD) form a pore in the inner membrane and the ATP-binding domain (NBD) is responsible for energy generation. This is Beta-(1--&gt;2)glucan export ATP-binding/permease protein NdvA from Agrobacterium vitis (Rhizobium vitis).